The chain runs to 201 residues: LexA repressor 1 (201 aa).

A DNA-binding region (H-T-H motif) is located at residues 27 to 47; that stretch reads LAEIAQAFGFASRNAAQKHVQ. Catalysis depends on for autocatalytic cleavage activity residues Ser-122 and Lys-159.

The protein belongs to the peptidase S24 family. Homodimer.

It carries out the reaction Hydrolysis of Ala-|-Gly bond in repressor LexA.. In terms of biological role, represses a number of genes involved in the response to DNA damage (SOS response), including recA and lexA. In the presence of single-stranded DNA, RecA interacts with LexA causing an autocatalytic cleavage which disrupts the DNA-binding part of LexA, leading to derepression of the SOS regulon and eventually DNA repair. The chain is LexA repressor 1 from Xanthomonas campestris pv. campestris (strain ATCC 33913 / DSM 3586 / NCPPB 528 / LMG 568 / P 25).